The primary structure comprises 225 residues: LexA repressor (225 aa).

The segment at residues 26–46 (YEEMKDSLNLKSKSGIHRLIS) is a DNA-binding region (H-T-H motif). Residues serine 146 and lysine 184 each act as for autocatalytic cleavage activity in the active site.

It belongs to the peptidase S24 family. As to quaternary structure, homodimer.

The catalysed reaction is Hydrolysis of Ala-|-Gly bond in repressor LexA.. Functionally, represses a number of genes involved in the response to DNA damage (SOS response), including recA and lexA. In the presence of single-stranded DNA, RecA interacts with LexA causing an autocatalytic cleavage which disrupts the DNA-binding part of LexA, leading to derepression of the SOS regulon and eventually DNA repair. This chain is LexA repressor, found in Pelagibacter ubique (strain HTCC1062).